A 309-amino-acid chain; its full sequence is tRNA pseudouridine synthase B (309 aa).

The active-site Nucleophile is the D40.

Belongs to the pseudouridine synthase TruB family. Type 1 subfamily.

It carries out the reaction uridine(55) in tRNA = pseudouridine(55) in tRNA. Its function is as follows. Responsible for synthesis of pseudouridine from uracil-55 in the psi GC loop of transfer RNAs. The sequence is that of tRNA pseudouridine synthase B from Mycobacterium avium (strain 104).